The sequence spans 357 residues: Uroporphyrinogen decarboxylase (357 aa).

Substrate is bound by residues 27–31 (RQAGR), aspartate 77, tyrosine 154, threonine 209, and histidine 327.

It belongs to the uroporphyrinogen decarboxylase family. Homodimer.

It localises to the cytoplasm. It carries out the reaction uroporphyrinogen III + 4 H(+) = coproporphyrinogen III + 4 CO2. The protein operates within porphyrin-containing compound metabolism; protoporphyrin-IX biosynthesis; coproporphyrinogen-III from 5-aminolevulinate: step 4/4. In terms of biological role, catalyzes the decarboxylation of four acetate groups of uroporphyrinogen-III to yield coproporphyrinogen-III. This chain is Uroporphyrinogen decarboxylase, found in Proteus mirabilis (strain HI4320).